The sequence spans 367 residues: Anhydro-N-acetylmuramic acid kinase (367 aa).

Residue 13-20 (GTSMDGAD) participates in ATP binding.

Belongs to the anhydro-N-acetylmuramic acid kinase family.

The enzyme catalyses 1,6-anhydro-N-acetyl-beta-muramate + ATP + H2O = N-acetyl-D-muramate 6-phosphate + ADP + H(+). It participates in amino-sugar metabolism; 1,6-anhydro-N-acetylmuramate degradation. Its pathway is cell wall biogenesis; peptidoglycan recycling. Catalyzes the specific phosphorylation of 1,6-anhydro-N-acetylmuramic acid (anhMurNAc) with the simultaneous cleavage of the 1,6-anhydro ring, generating MurNAc-6-P. Is required for the utilization of anhMurNAc either imported from the medium or derived from its own cell wall murein, and thus plays a role in cell wall recycling. In Neisseria meningitidis serogroup B (strain ATCC BAA-335 / MC58), this protein is Anhydro-N-acetylmuramic acid kinase.